We begin with the raw amino-acid sequence, 181 residues long: I-Kappa-B like protein C2 (181 aa).

3 ANK repeats span residues 54-86 (DGKX…DINS), 91-121 (DGNT…DMEI), and 125-154 (ARKT…RCDV).

The protein belongs to the polydnaviridae I-Kappa-B-like protein family.

Its function is as follows. Suppresses the host immune response through NF-kappa-B inactivation. Possesses ankyrin repeat domains required for NF-kappa-B binding but lacks the regulatory regions required for dissociation from NF-kappa-B and degradation. Therefore, prevents host NF-kappa-B release and subsequent activation. In Microplitis demolitor (Parasitoid wasp), this protein is I-Kappa-B like protein C2 (C2).